The primary structure comprises 365 residues: PHD finger protein 6 (365 aa).

Ser-2 is subject to N-acetylserine. 2 consecutive short sequence motifs (nuclear localization signal) follow at residues 13 to 16 (RQRK) and 129 to 133 (RKHKK). Residues 14–52 (QRKCGFCKSNRDKECGQLLISENQKVAAHHKCMLFSSAL) form a C2HC pre-PHD-type 1 zinc finger. The tract at residues 14-132 (QRKCGFCKSN…IYMVYCRKHK (119 aa)) is extended PHD1 domain (ePHD1). The PHD-type 1 zinc finger occupies 80–132 (LMCSLCHCPGATIGCDVKTCHRTYHYHCALHDKAQIREKPSQGIYMVYCRKHK). Phosphoserine occurs at positions 138, 145, and 155. The tract at residues 139–211 (EADLEESFNE…RSSPSDTRPK (73 aa)) is disordered. A Nucleolar localization signal motif is present at residues 157–169 (KSKKKSRKGRPRK). The span at 157–171 (KSKKKSRKGRPRKTN) shows a compositional bias: basic residues. Residue Lys-173 forms a Glycyl lysine isopeptide (Lys-Gly) (interchain with G-Cter in SUMO2) linkage. Residues Ser-183 and Ser-199 each carry the phosphoserine modification. A C2HC pre-PHD-type 2 zinc finger spans residues 209 to 249 (RPKCGFCHVGEEENEARGKLHIFNAKKAAAHYKCMLFSSGT). The extended PHD2 domain (ePHD2) stretch occupies residues 209–330 (RPKCGFCHVG…IYKLYCKNHS (122 aa)). A Glycyl lysine isopeptide (Lys-Gly) (interchain with G-Cter in SUMO2) cross-link involves residue Lys-227. Residues 278–330 (MKCTLCSQPGATIGCEIKACVKTYHYHCGVQDKAKYIENMSRGIYKLYCKNHS) form a PHD-type 2 zinc finger. The interval 330–365 (SGNDERDEEDEERESKSRGKVEIDQQQLTQQQLNGN) is disordered. Residues 342–352 (RESKSRGKVEI) show a composition bias toward basic and acidic residues. The span at 354-365 (QQQLTQQQLNGN) shows a compositional bias: low complexity. Thr-358 carries the phosphothreonine modification.

Interacts with UBTF. Interacts with the NuRD complex component RBBP4 (via the nucleolar localization motif), the interaction mediates transcriptional repression activity.

It is found in the nucleus. Its subcellular location is the nucleolus. The protein resides in the chromosome. The protein localises to the centromere. It localises to the kinetochore. Functionally, transcriptional regulator that associates with ribosomal RNA promoters and suppresses ribosomal RNA (rRNA) transcription. In Pongo abelii (Sumatran orangutan), this protein is PHD finger protein 6 (PHF6).